A 90-amino-acid polypeptide reads, in one-letter code: Leech factor Xa inhibitor (90 aa).

It localises to the secreted. Potent anticoagulant inhibiting the amidolytic activity of factor Xa (F10) (Ki=4nM) and reducing its ability to activate prothrombin (F2) in the prothrombinase complex (EC(50)=40nM). The protein is Leech factor Xa inhibitor of Haementeria depressa (Leech).